A 159-amino-acid polypeptide reads, in one-letter code: Putative pre-16S rRNA nuclease (159 aa).

The protein belongs to the YqgF nuclease family.

The protein resides in the cytoplasm. Could be a nuclease involved in processing of the 5'-end of pre-16S rRNA. The polypeptide is Putative pre-16S rRNA nuclease (Bartonella henselae (strain ATCC 49882 / DSM 28221 / CCUG 30454 / Houston 1) (Rochalimaea henselae)).